A 152-amino-acid chain; its full sequence is Superoxide dismutase [Cu-Zn] (152 aa).

Positions 45, 47, and 62 each coordinate Cu cation. The cysteines at positions 56 and 145 are disulfide-linked. Residues H62, H70, H79, and D82 each contribute to the Zn(2+) site. H119 provides a ligand contact to Cu cation.

The protein belongs to the Cu-Zn superoxide dismutase family. Homodimer. Cu cation is required as a cofactor. Zn(2+) serves as cofactor.

The protein localises to the cytoplasm. The catalysed reaction is 2 superoxide + 2 H(+) = H2O2 + O2. Its function is as follows. Destroys radicals which are normally produced within the cells and which are toxic to biological systems. In Pisum sativum (Garden pea), this protein is Superoxide dismutase [Cu-Zn] (SODCC).